Consider the following 305-residue polypeptide: Ribonucleoside-diphosphate reductase small subunit (305 aa).

Fe cation-binding residues include Glu64, Glu94, and His97. Tyr101 is an active-site residue. The helical transmembrane segment at 150–170 (VLIFYLIEGVFFISSFYCIGL) threads the bilayer. 3 residues coordinate Fe cation: Glu157, Glu191, and His194.

This sequence belongs to the ribonucleoside diphosphate reductase small chain family. As to quaternary structure, heterotetramer composed of a homodimer of the large subunit (R1) and a homodimer of the small subunit (R2). Larger multisubunit protein complex are also active, composed of (R1)n(R2)n. The cofactor is Fe cation.

The protein localises to the host membrane. The catalysed reaction is a 2'-deoxyribonucleoside 5'-diphosphate + [thioredoxin]-disulfide + H2O = a ribonucleoside 5'-diphosphate + [thioredoxin]-dithiol. Ribonucleoside-diphosphate reductase holoenzyme provides the precursors necessary for viral DNA synthesis. Allows virus growth in non-dividing cells, as well as reactivation from latency in infected hosts. Catalyzes the biosynthesis of deoxyribonucleotides from the corresponding ribonucleotides. The polypeptide is Ribonucleoside-diphosphate reductase small subunit (Alcelaphine herpesvirus 1 (strain C500) (AlHV-1)).